The primary structure comprises 453 residues: Phosphoglucosamine mutase (453 aa).

Ser-108 acts as the Phosphoserine intermediate in catalysis. Positions 108, 247, 249, and 251 each coordinate Mg(2+). Ser-108 carries the post-translational modification Phosphoserine.

The protein belongs to the phosphohexose mutase family. Mg(2+) serves as cofactor. Post-translationally, activated by phosphorylation.

The enzyme catalyses alpha-D-glucosamine 1-phosphate = D-glucosamine 6-phosphate. Its function is as follows. Catalyzes the conversion of glucosamine-6-phosphate to glucosamine-1-phosphate. This chain is Phosphoglucosamine mutase, found in Methylobacillus flagellatus (strain ATCC 51484 / DSM 6875 / VKM B-1610 / KT).